The chain runs to 449 residues: tRNA-2-methylthio-N(6)-dimethylallyladenosine synthase (449 aa).

One can recognise an MTTase N-terminal domain in the interval 3–124 (KMLYIKTYGC…LPTMLEKLDS (122 aa)). Residues Cys12, Cys48, Cys87, Cys163, Cys167, and Cys170 each contribute to the [4Fe-4S] cluster site. The 232-residue stretch at 149–380 (KSPTVSGLVS…QAQLMQQQLE (232 aa)) folds into the Radical SAM core domain. Residues 383 to 447 (QKLIGKVVPV…ASSLFGEVYA (65 aa)) form the TRAM domain.

The protein belongs to the methylthiotransferase family. MiaB subfamily. In terms of assembly, monomer. [4Fe-4S] cluster serves as cofactor.

The protein localises to the cytoplasm. The enzyme catalyses N(6)-dimethylallyladenosine(37) in tRNA + (sulfur carrier)-SH + AH2 + 2 S-adenosyl-L-methionine = 2-methylsulfanyl-N(6)-dimethylallyladenosine(37) in tRNA + (sulfur carrier)-H + 5'-deoxyadenosine + L-methionine + A + S-adenosyl-L-homocysteine + 2 H(+). In terms of biological role, catalyzes the methylthiolation of N6-(dimethylallyl)adenosine (i(6)A), leading to the formation of 2-methylthio-N6-(dimethylallyl)adenosine (ms(2)i(6)A) at position 37 in tRNAs that read codons beginning with uridine. This is tRNA-2-methylthio-N(6)-dimethylallyladenosine synthase from Orientia tsutsugamushi (strain Ikeda) (Rickettsia tsutsugamushi).